We begin with the raw amino-acid sequence, 364 residues long: Dihydroorotate dehydrogenase (quinone) (364 aa).

FMN-binding positions include 62-66 and threonine 86; that span reads AGFDK. Residue lysine 66 coordinates substrate. Position 111–115 (111–115) interacts with substrate; it reads NRMGF. Residues asparagine 142 and asparagine 175 each contribute to the FMN site. Asparagine 175 provides a ligand contact to substrate. The active-site Nucleophile is serine 178. Substrate is bound at residue asparagine 180. Lysine 216 and threonine 244 together coordinate FMN. Residue 245-246 coordinates substrate; it reads NT. Residues glycine 267, glycine 296, and 317–318 each bind FMN; that span reads YT.

This sequence belongs to the dihydroorotate dehydrogenase family. Type 2 subfamily. In terms of assembly, monomer. The cofactor is FMN.

The protein resides in the cell membrane. It carries out the reaction (S)-dihydroorotate + a quinone = orotate + a quinol. It participates in pyrimidine metabolism; UMP biosynthesis via de novo pathway; orotate from (S)-dihydroorotate (quinone route): step 1/1. In terms of biological role, catalyzes the conversion of dihydroorotate to orotate with quinone as electron acceptor. In Anaeromyxobacter dehalogenans (strain 2CP-C), this protein is Dihydroorotate dehydrogenase (quinone).